A 500-amino-acid chain; its full sequence is Cytochrome P450 2D26 (500 aa).

Phosphoserine is present on Ser-249. Cys-446 lines the heme pocket.

It belongs to the cytochrome P450 family. Requires heme as cofactor.

It is found in the endoplasmic reticulum membrane. The protein localises to the microsome membrane. It carries out the reaction an organic molecule + reduced [NADPH--hemoprotein reductase] + O2 = an alcohol + oxidized [NADPH--hemoprotein reductase] + H2O + H(+). In terms of biological role, cytochromes P450 are a group of heme-thiolate monooxygenases. In liver microsomes, this enzyme is involved in an NADPH-dependent electron transport pathway. It oxidizes a variety of structurally unrelated compounds, including steroids, fatty acids, and xenobiotics. This chain is Cytochrome P450 2D26 (Cyp2d26), found in Rattus norvegicus (Rat).